Reading from the N-terminus, the 104-residue chain is UPF0145 protein VNG_2432C (104 aa).

The protein belongs to the UPF0145 family.

The chain is UPF0145 protein VNG_2432C from Halobacterium salinarum (strain ATCC 700922 / JCM 11081 / NRC-1) (Halobacterium halobium).